Reading from the N-terminus, the 113-residue chain is Ribosome-binding factor A (113 aa).

This sequence belongs to the RbfA family. Monomer. Binds 30S ribosomal subunits, but not 50S ribosomal subunits or 70S ribosomes.

The protein resides in the cytoplasm. Its function is as follows. One of several proteins that assist in the late maturation steps of the functional core of the 30S ribosomal subunit. Associates with free 30S ribosomal subunits (but not with 30S subunits that are part of 70S ribosomes or polysomes). Required for efficient processing of 16S rRNA. May interact with the 5'-terminal helix region of 16S rRNA. The protein is Ribosome-binding factor A of Mycoplasmopsis agalactiae (strain NCTC 10123 / CIP 59.7 / PG2) (Mycoplasma agalactiae).